The sequence spans 408 residues: CCA-adding enzyme (408 aa).

2 residues coordinate ATP: glycine 8 and arginine 11. Residues glycine 8 and arginine 11 each coordinate CTP. 2 residues coordinate Mg(2+): glutamate 21 and aspartate 23. Residues arginine 91, arginine 137, and arginine 140 each contribute to the ATP site. CTP contacts are provided by arginine 91, arginine 137, and arginine 140. Residues 226–329 enclose the HD domain; it reads TGYYTMTTLS…MTLFHVFDCW (104 aa).

Belongs to the tRNA nucleotidyltransferase/poly(A) polymerase family. Bacterial CCA-adding enzyme type 2 subfamily. Requires Mg(2+) as cofactor.

It catalyses the reaction a tRNA precursor + 2 CTP + ATP = a tRNA with a 3' CCA end + 3 diphosphate. The catalysed reaction is a tRNA with a 3' CCA end + 2 CTP + ATP = a tRNA with a 3' CCACCA end + 3 diphosphate. Functionally, catalyzes the addition and repair of the essential 3'-terminal CCA sequence in tRNAs without using a nucleic acid template. Adds these three nucleotides in the order of C, C, and A to the tRNA nucleotide-73, using CTP and ATP as substrates and producing inorganic pyrophosphate. tRNA 3'-terminal CCA addition is required both for tRNA processing and repair. Also involved in tRNA surveillance by mediating tandem CCA addition to generate a CCACCA at the 3' terminus of unstable tRNAs. While stable tRNAs receive only 3'-terminal CCA, unstable tRNAs are marked with CCACCA and rapidly degraded. This chain is CCA-adding enzyme, found in Blochmanniella pennsylvanica (strain BPEN).